We begin with the raw amino-acid sequence, 319 residues long: Guanidinobutyrase (319 aa).

Mn(2+)-binding residues include His129, Asp152, His154, Asp156, Asp243, and Asp245.

This sequence belongs to the arginase family. Agmatinase subfamily. In terms of assembly, homohexamer. The cofactor is Mn(2+).

The enzyme catalyses 4-guanidinobutanoate + H2O = urea + 4-aminobutanoate. Catalyzes specifically the hydrolysis of 4-guanidinobutanoate to 4-aminobutanoate and urea. Has no activity against arginine, agmatine, 3-guanidinopropionate and guanidinoacetate. In Pseudomonas aeruginosa (strain ATCC 15692 / DSM 22644 / CIP 104116 / JCM 14847 / LMG 12228 / 1C / PRS 101 / PAO1), this protein is Guanidinobutyrase (gbuA).